The primary structure comprises 451 residues: Speckle-type POZ protein homolog (451 aa).

The interval 51–75 (EVVSSGSGNSAHGRSISPSPSSASH) is disordered. Over residues 60-75 (SAHGRSISPSPSSASH) the composition is skewed to low complexity. An MATH domain is found at 95–225 (KFNYMWTINN…GDRLSIFCEV (131 aa)). In terms of domain architecture, BTB spans 265–338 (SDFTLVCKSD…MYTGQTKYIE (74 aa)).

This sequence belongs to the Tdpoz family.

The protein localises to the nucleus. The protein resides in the nucleus speckle. The protein operates within protein modification; protein ubiquitination. Functionally, mediates ubiquitination and proteasomal degradation of target proteins, most likely in complex with cul-3. May promote the degradation of bromodomain-containing proteins such as bet-1. This Caenorhabditis elegans protein is Speckle-type POZ protein homolog.